Consider the following 303-residue polypeptide: Glycine--tRNA ligase alpha subunit (303 aa).

It belongs to the class-II aminoacyl-tRNA synthetase family. In terms of assembly, tetramer of two alpha and two beta subunits.

The protein localises to the cytoplasm. The catalysed reaction is tRNA(Gly) + glycine + ATP = glycyl-tRNA(Gly) + AMP + diphosphate. In Salmonella paratyphi A (strain ATCC 9150 / SARB42), this protein is Glycine--tRNA ligase alpha subunit.